The primary structure comprises 581 residues: Laccase-2 (581 aa).

An N-terminal signal peptide occupies residues methionine 1 to alanine 19. 2 consecutive Plastocyanin-like domains span residues serine 74 to threonine 191 and aspartate 197 to serine 353. Asparagine 77, asparagine 93, and asparagine 120 each carry an N-linked (GlcNAc...) asparagine glycan. The Cu cation site is built by histidine 125, histidine 127, histidine 169, and histidine 171. Cysteine 146 and cysteine 562 are disulfide-bonded. N-linked (GlcNAc...) asparagine glycans are attached at residues asparagine 232, asparagine 283, asparagine 343, asparagine 408, asparagine 427, and asparagine 441. The region spanning leucine 413–serine 547 is the Plastocyanin-like 3 domain. 7 residues coordinate Cu cation: histidine 464, histidine 467, histidine 469, histidine 526, cysteine 527, histidine 528, and histidine 532.

This sequence belongs to the multicopper oxidase family. Cu cation serves as cofactor.

It is found in the secreted. It carries out the reaction 4 hydroquinone + O2 = 4 benzosemiquinone + 2 H2O. Functionally, lignin degradation and detoxification of lignin-derived products. This Botryotinia fuckeliana (Noble rot fungus) protein is Laccase-2 (lcc2).